We begin with the raw amino-acid sequence, 89 residues long: MALTQERKNEIIKEYARHEGDTGSAEVQIAVLTADINELNVHMAAHKHDFHSQRGLMKKIGSRRNLLRYLRNTDIQRYRELIQRLGLRR.

This sequence belongs to the universal ribosomal protein uS15 family. Part of the 30S ribosomal subunit. Forms a bridge to the 50S subunit in the 70S ribosome, contacting the 23S rRNA.

In terms of biological role, one of the primary rRNA binding proteins, it binds directly to 16S rRNA where it helps nucleate assembly of the platform of the 30S subunit by binding and bridging several RNA helices of the 16S rRNA. Forms an intersubunit bridge (bridge B4) with the 23S rRNA of the 50S subunit in the ribosome. The sequence is that of Small ribosomal subunit protein uS15 from Leuconostoc citreum (strain KM20).